Reading from the N-terminus, the 350-residue chain is Probable galactose-1-phosphate uridylyltransferase (350 aa).

Positions 31–52 are disordered; that stretch reads PWSGQQEKAQKNELPEFDPTNP. A Zn(2+)-binding site is contributed by C54. UDP-alpha-D-glucose is bound by residues 76–77 and N152; that span reads ND. H163 is a Zn(2+) binding site. Catalysis depends on H165, which acts as the Tele-UMP-histidine intermediate. UDP-alpha-D-glucose-binding positions include Q167, 314–317, and 319–320; these read KFMV and FE.

It belongs to the galactose-1-phosphate uridylyltransferase type 1 family. In terms of assembly, homodimer. Zn(2+) is required as a cofactor.

The catalysed reaction is alpha-D-galactose 1-phosphate + UDP-alpha-D-glucose = alpha-D-glucose 1-phosphate + UDP-alpha-D-galactose. Its pathway is carbohydrate metabolism; galactose metabolism. This Drosophila melanogaster (Fruit fly) protein is Probable galactose-1-phosphate uridylyltransferase (Galt).